The following is a 196-amino-acid chain: Proteasome subunit beta 1 (196 aa).

The propeptide at 1–6 (MEKKTG) is removed in mature form; by autocatalysis. Residue T7 is the Nucleophile of the active site.

This sequence belongs to the peptidase T1B family. As to quaternary structure, the 20S proteasome core is composed of 14 alpha and 14 beta subunits that assemble into four stacked heptameric rings, resulting in a barrel-shaped structure. The two inner rings, each composed of seven catalytic beta subunits, are sandwiched by two outer rings, each composed of seven alpha subunits. The catalytic chamber with the active sites is on the inside of the barrel. Has a gated structure, the ends of the cylinder being occluded by the N-termini of the alpha-subunits. Is capped at one or both ends by the proteasome regulatory ATPase, PAN.

The protein localises to the cytoplasm. It catalyses the reaction Cleavage of peptide bonds with very broad specificity.. Its activity is regulated as follows. The formation of the proteasomal ATPase PAN-20S proteasome complex, via the docking of the C-termini of PAN into the intersubunit pockets in the alpha-rings, triggers opening of the gate for substrate entry. Interconversion between the open-gate and close-gate conformations leads to a dynamic regulation of the 20S proteasome proteolysis activity. Functionally, component of the proteasome core, a large protease complex with broad specificity involved in protein degradation. This is Proteasome subunit beta 1 from Pyrococcus furiosus (strain ATCC 43587 / DSM 3638 / JCM 8422 / Vc1).